The primary structure comprises 90 residues: UPF0297 protein Swol_0469 (90 aa).

This sequence belongs to the UPF0297 family.

The chain is UPF0297 protein Swol_0469 from Syntrophomonas wolfei subsp. wolfei (strain DSM 2245B / Goettingen).